The sequence spans 550 residues: Eukaryotic translation initiation factor 3 subunit L (550 aa).

The disordered stretch occupies residues 1 to 20 (MVRDSFDGGHTGDPERDLAY). A PCI domain is found at 309 to 503 (EATKIFVNCL…IDDSTTDLDF (195 aa)).

Belongs to the eIF-3 subunit L family. Component of the eukaryotic translation initiation factor 3 (eIF-3) complex.

It localises to the cytoplasm. Component of the eukaryotic translation initiation factor 3 (eIF-3) complex, which is involved in protein synthesis of a specialized repertoire of mRNAs and, together with other initiation factors, stimulates binding of mRNA and methionyl-tRNAi to the 40S ribosome. The eIF-3 complex specifically targets and initiates translation of a subset of mRNAs involved in cell proliferation. The protein is Eukaryotic translation initiation factor 3 subunit L of Brugia malayi (Filarial nematode worm).